We begin with the raw amino-acid sequence, 243 residues long: MLTFLIPTAKEMKPVPPCYPHQLPQKSLPILEAMAELSLEELARAYSISIEAASKEAKRLKAIAQGQSSAYPAYQLFNGLMYRHLKRDNLSKDQQDYLSKQVYITSSFYGIIPTDEKIAEHRHDFHTKVTINGQSLKHYWRPIYDQFAKDHKQIISLLSSEFKDVFSKEYQRLWISPKFMEERSGQLKTHSTISKKARGAFLTACLENNVQTKEALKQLSFAGFCYNEELSTETNYYYIKKES.

The protein belongs to the UPF0246 family.

This is UPF0246 protein Sez_1855 from Streptococcus equi subsp. zooepidemicus (strain MGCS10565).